The primary structure comprises 252 residues: 3-dehydroquinate dehydratase (252 aa).

3-dehydroquinate is bound by residues Ser21, Glu46–Arg48, and Arg82. Residue His143 is the Proton donor/acceptor of the active site. Lys170 serves as the catalytic Schiff-base intermediate with substrate. 3 residues coordinate 3-dehydroquinate: Arg213, Ser232, and Gln236.

It belongs to the type-I 3-dehydroquinase family. As to quaternary structure, homodimer.

The catalysed reaction is 3-dehydroquinate = 3-dehydroshikimate + H2O. It functions in the pathway metabolic intermediate biosynthesis; chorismate biosynthesis; chorismate from D-erythrose 4-phosphate and phosphoenolpyruvate: step 3/7. In terms of biological role, involved in the third step of the chorismate pathway, which leads to the biosynthesis of aromatic amino acids. Catalyzes the cis-dehydration of 3-dehydroquinate (DHQ) and introduces the first double bond of the aromatic ring to yield 3-dehydroshikimate. The polypeptide is 3-dehydroquinate dehydratase (Shigella flexneri serotype 5b (strain 8401)).